Consider the following 132-residue polypeptide: Small ribosomal subunit protein uS8 (132 aa).

The protein belongs to the universal ribosomal protein uS8 family. As to quaternary structure, part of the 30S ribosomal subunit. Contacts proteins S5 and S12.

One of the primary rRNA binding proteins, it binds directly to 16S rRNA central domain where it helps coordinate assembly of the platform of the 30S subunit. The chain is Small ribosomal subunit protein uS8 from Staphylococcus epidermidis (strain ATCC 35984 / DSM 28319 / BCRC 17069 / CCUG 31568 / BM 3577 / RP62A).